Reading from the N-terminus, the 193-residue chain is Interferon lambda-2 (193 aa).

Positions 1–19 are cleaved as a signal peptide; the sequence is MLLLLLPLLLAAVLTRTQA. Asn-105 carries an N-linked (GlcNAc...) asparagine glycan.

It belongs to the lambda interferon family.

It localises to the secreted. Functionally, cytokine with antiviral, antitumour and immunomodulatory activities. Plays a critical role in the antiviral host defense, predominantly in the epithelial tissues. Acts as a ligand for the heterodimeric class II cytokine receptor composed of IL10RB and IFNLR1, and receptor engagement leads to the activation of the JAK/STAT signaling pathway resulting in the expression of IFN-stimulated genes (ISG), which mediate the antiviral state. Has a restricted receptor distribution and therefore restricted targets: is primarily active in epithelial cells and this cell type-selective action is because of the epithelial cell-specific expression of its receptor IFNLR1. Seems not to be essential for early virus-activated host defense in vaginal infection, but plays an important role in Toll-like receptor (TLR)-induced antiviral defense. Plays a significant role in the antiviral immune defense in the intestinal epithelium. Exerts an immunomodulatory effect by up-regulating MHC class I antigen expression. The sequence is that of Interferon lambda-2 (Ifnl2) from Mus musculus (Mouse).